Reading from the N-terminus, the 528-residue chain is Beta-galactoside alpha-2,6-sialyltransferase 2 (528 aa).

Residues 1–10 are Cytoplasmic-facing; it reads MKPNLKQWKQ. The chain crosses the membrane as a helical; Signal-anchor for type II membrane protein span at residues 11–31; it reads LMLFGIFAWGLLFLVIFIYFT. The Lumenal portion of the chain corresponds to 32–528; it reads DSNSAEPVPS…CPERNNFPPL (497 aa). N167, N308, and N338 each carry an N-linked (GlcNAc...) asparagine glycan. 3 disulfide bridges follow: C254/C519, C297/C448, and C466/C477.

This sequence belongs to the glycosyltransferase 29 family.

It localises to the golgi apparatus. Its subcellular location is the golgi stack membrane. It catalyses the reaction a beta-D-galactoside + CMP-N-acetyl-beta-neuraminate = an N-acetyl-alpha-neuraminyl-(2-&gt;6)-beta-D-galactosyl derivative + CMP + H(+). Transfers sialic acid from the donor of substrate CMP-sialic acid to galactose containing acceptor substrates. This chain is Beta-galactoside alpha-2,6-sialyltransferase 2 (ST6GAL2), found in Gallus gallus (Chicken).